Consider the following 239-residue polypeptide: Large ribosomal subunit protein uL2 (239 aa).

The segment at 205 to 224 (GGHQHCGRPKTVARGTSPGR) is disordered.

Belongs to the universal ribosomal protein uL2 family. In terms of assembly, part of the 50S ribosomal subunit. Forms a bridge to the 30S subunit in the 70S ribosome.

Its function is as follows. One of the primary rRNA binding proteins. Required for association of the 30S and 50S subunits to form the 70S ribosome, for tRNA binding and peptide bond formation. It has been suggested to have peptidyltransferase activity; this is somewhat controversial. Makes several contacts with the 16S rRNA in the 70S ribosome. In Methanoculleus marisnigri (strain ATCC 35101 / DSM 1498 / JR1), this protein is Large ribosomal subunit protein uL2.